A 313-amino-acid polypeptide reads, in one-letter code: MSVNLKGRSLLTLLDFSPEEIRYLLDISKQVKMENRSKLRTERFKGMTLAMIFEKRSTRTRLAFETAFAEEGGHPIFLSPNDIHLGAKESLEDTARVLGRMVDAIMFRGYKQETVEKLAEYSGVPVYNGLTDEFHPTQALADLMTIEENFGRLKGVKVVFMGDTRNNVATSLMIACAKMGMNFVACGPEELKPRSDVFKRCQEIVKETDGSVSFTSNLEEALAGADVVYTDVWASMGEEDKEKERMALLKPYQVNERVMEMTGKSETIFMHCLPAVKGQEVTYEVIEGKQSRVWDEAENRKHTIKAVMIATLL.

Residues 57-60 (STRT), R108, and 135-138 (HPTQ) each bind carbamoyl phosphate. L-ornithine-binding positions include N167, D231, and 235-236 (SM). Residues 272–273 (CL) and R300 each bind carbamoyl phosphate.

The protein belongs to the aspartate/ornithine carbamoyltransferase superfamily. OTCase family.

It is found in the cytoplasm. The enzyme catalyses carbamoyl phosphate + L-ornithine = L-citrulline + phosphate + H(+). It participates in amino-acid biosynthesis; L-arginine biosynthesis; L-arginine from L-ornithine and carbamoyl phosphate: step 1/3. Functionally, reversibly catalyzes the transfer of the carbamoyl group from carbamoyl phosphate (CP) to the N(epsilon) atom of ornithine (ORN) to produce L-citrulline. The polypeptide is Ornithine carbamoyltransferase (Thermotoga maritima (strain ATCC 43589 / DSM 3109 / JCM 10099 / NBRC 100826 / MSB8)).